The sequence spans 142 residues: Transcription antitermination protein NusB (142 aa).

This sequence belongs to the NusB family.

In terms of biological role, involved in transcription antitermination. Required for transcription of ribosomal RNA (rRNA) genes. Binds specifically to the boxA antiterminator sequence of the ribosomal RNA (rrn) operons. This is Transcription antitermination protein NusB from Streptomyces coelicolor (strain ATCC BAA-471 / A3(2) / M145).